A 248-amino-acid polypeptide reads, in one-letter code: DNA repair protein RecO (248 aa).

This sequence belongs to the RecO family.

Involved in DNA repair and RecF pathway recombination. This Rubrobacter xylanophilus (strain DSM 9941 / JCM 11954 / NBRC 16129 / PRD-1) protein is DNA repair protein RecO.